Here is a 136-residue protein sequence, read N- to C-terminus: Inner membrane protein YbhQ (136 aa).

Over 1–12 (MKWQQRVRVATG) the chain is Cytoplasmic. Residues 13–33 (LSCWQIMLHLLVVALLVVGWM) form a helical membrane-spanning segment. Residues 34 to 37 (SKTL) are Periplasmic-facing. A helical transmembrane segment spans residues 38–58 (VHVGVGLCALYCVTVVMMLVF). Over 59–71 (QRHPEQRWREVAD) the chain is Cytoplasmic. The helical transmembrane segment at 72 to 92 (VLEELTTTWYFGAALIVLWLL) threads the bilayer. Over 93–99 (SRVLENN) the chain is Periplasmic. Residues 100–120 (FLLAIAGLAILAGPAVVSLLA) traverse the membrane as a helical segment. At 121-136 (KDKKLHHLTSKHRVRR) the chain is on the cytoplasmic side.

It localises to the cell inner membrane. This chain is Inner membrane protein YbhQ (ybhQ), found in Escherichia coli O157:H7.